Consider the following 406-residue polypeptide: Argininosuccinate synthase (406 aa).

8–16 is an ATP binding site; that stretch reads AYSGGLDTS. Position 86 (Tyr-86) interacts with L-citrulline. Gly-116 lines the ATP pocket. Thr-118, Asn-122, and Asp-123 together coordinate L-aspartate. Residue Asn-122 coordinates L-citrulline. Positions 126, 174, 183, 259, and 271 each coordinate L-citrulline.

This sequence belongs to the argininosuccinate synthase family. Type 1 subfamily. Homotetramer.

Its subcellular location is the cytoplasm. The enzyme catalyses L-citrulline + L-aspartate + ATP = 2-(N(omega)-L-arginino)succinate + AMP + diphosphate + H(+). The protein operates within amino-acid biosynthesis; L-arginine biosynthesis; L-arginine from L-ornithine and carbamoyl phosphate: step 2/3. The protein is Argininosuccinate synthase of Dehalococcoides mccartyi (strain ATCC BAA-2100 / JCM 16839 / KCTC 5957 / BAV1).